A 635-amino-acid polypeptide reads, in one-letter code: Nuclear distribution protein nudE homolog 1 (635 aa).

Positions 14–192 form a coiled coil; that stretch reads EKEIKHWKSK…TILRDLVTRS (179 aa). Disordered stretches follow at residues 35-63, 200-267, 279-328, 389-504, and 516-635; these read ESSLQDFVESSKELEQEMEKELSASNKTI, TMAS…LSRD, VLDD…SARA, SRVV…DHDP, and AAQA…TETF. A compositionally biased stretch (basic and acidic residues) spans 43-56; that stretch reads ESSKELEQEMEKEL. 2 stretches are compositionally biased toward polar residues: residues 201–224 and 237–246; these read MASSTYDDSTAPRSEQSFDSSPIK and SRQALSSPVT. Positions 280 to 299 are enriched in low complexity; the sequence is LDDSPTATTTSAAPTRSSTL. Composition is skewed to polar residues over residues 314-326 and 411-428; these read ASTSHGLTSSPSA and GSPSANGHNSIHMPTSTP. Residues 516-541 show a composition bias toward low complexity; it reads AAQASVAKRRTSMSGSGMSHSASHGS. Composition is skewed to polar residues over residues 547–571 and 580–619; these read SGSTLPRSTTPSTVAAPRVTQSSMT and SKRTPLSTRLASSHRNASSARGSINGPPSSWKTSAMPAQT. Residues 620–635 are compositionally biased toward low complexity; sequence LSRSRSSSLGSETETF.

This sequence belongs to the nudE family. As to quaternary structure, self-associates. Interacts with PAC1.

It is found in the cytoplasm. The protein resides in the cytoskeleton. In terms of biological role, required for nuclear migration. This is Nuclear distribution protein nudE homolog 1 (NDE1) from Mycosarcoma maydis (Corn smut fungus).